Reading from the N-terminus, the 444-residue chain is Putative zinc metalloprotease PD_0327 (444 aa).

H22 serves as a coordination point for Zn(2+). The active site involves E23. H26 provides a ligand contact to Zn(2+). The helical transmembrane segment at 98–120 (IAIVAAGPLANLLLCMLLLWVLF) threads the bilayer. A PDZ domain is found at 192 to 278 (TLELSKLKQP…HPGMIEIRRG (87 aa)). 2 helical membrane passes run 371–393 (VGWF…LFPI) and 418–440 (AMAA…AFYN).

Belongs to the peptidase M50B family. It depends on Zn(2+) as a cofactor.

The protein resides in the cell inner membrane. The protein is Putative zinc metalloprotease PD_0327 of Xylella fastidiosa (strain Temecula1 / ATCC 700964).